A 401-amino-acid polypeptide reads, in one-letter code: Lsg locus putative protein 1 (401 aa).

Helical transmembrane passes span 8–28 (VIYLVGELSSKLVPFLLLPYL), 36–56 (GYGSLSYYQTFLSLFLIVVSL), 87–107 (IIGSIILIGCWIAQSEILFYA), 132–152 (SYAFIQFSLTVTGAVFTVALL), 162–182 (KRILAILLSNLVVWFFSYFLY), 199–219 (ALFYILGFGLPLILHYASFFL), 237–257 (LGLYAMGAQLALVVSIAIQAL), 282–302 (WALFSFLLIPIPALIMWIIPE), 320–340 (FILFLISTTLSIPYLILVNYL), 352–372 (CSVLSTIIYVASLVALTFTEI), and 374–394 (YIPYAGIIGSLSIIPILYFMT).

It belongs to the polysaccharide synthase family. HI_0867/HI_1700 subfamily.

Its subcellular location is the cell membrane. The sequence is that of Lsg locus putative protein 1 from Haemophilus influenzae (strain ATCC 51907 / DSM 11121 / KW20 / Rd).